A 536-amino-acid polypeptide reads, in one-letter code: Atrial natriuretic peptide receptor 3 (536 aa).

A signal peptide spans 1–26 (MRSLLLFTFSACVLLARVLLAGGASS). A propeptide spanning residues 27-40 (GAGDTRPGSRRRAR) is cleaved from the precursor. Residues 41–478 (EALAAQKIEV…KSSGGLEESA (438 aa)) are Extracellular-facing. A glycan (N-linked (GlcNAc...) asparagine) is linked at asparagine 81. Residues serine 101, valine 130, and cysteine 131 each contribute to the chloride site. Disulfide bonds link cysteine 103/cysteine 131 and cysteine 208/cysteine 256. Asparagine 288 and asparagine 389 each carry an N-linked (GlcNAc...) asparagine glycan. A helical transmembrane segment spans residues 479 to 499 (VTGIVVGALLGAGLLMAFYFF). Residues 500 to 536 (RKKYRITIERRNQQEESNIGKHRELREDSIRSHFSVA) lie on the Cytoplasmic side of the membrane.

This sequence belongs to the ANF receptor family. In terms of assembly, homodimer; disulfide-linked. Interacts with OSTN.

It is found in the cell membrane. Receptor for the natriuretic peptide hormones, binding with similar affinities atrial natriuretic peptide NPPA/ANP, brain natriuretic peptide NPPB/BNP, and C-type natriuretic peptide NPPC/CNP. May function as a clearance receptor for NPPA, NPPB and NPPC, regulating their local concentrations and effects. Acts as a regulator of osteoblast differentiation and bone growth by binding to its ligand osteocrin, thereby preventing binding between NPR3/NPR-C and natriuretic peptides, leading to increase cGMP production. The protein is Atrial natriuretic peptide receptor 3 (Npr3) of Mus musculus (Mouse).